The chain runs to 242 residues: NADH-quinone oxidoreductase subunit C (242 aa).

Residues 67–101 form an insert region; that stretch reads VVNSVGLGHKEQGAKPITNRRTTSDNVGESKSIDY.

This sequence belongs to the complex I 30 kDa subunit family. As to quaternary structure, NDH-1 is composed of 14 different subunits. Subunits NuoB, C, D, E, F, and G constitute the peripheral sector of the complex.

The protein resides in the cell inner membrane. The catalysed reaction is a quinone + NADH + 5 H(+)(in) = a quinol + NAD(+) + 4 H(+)(out). Its function is as follows. NDH-1 shuttles electrons from NADH, via FMN and iron-sulfur (Fe-S) centers, to quinones in the respiratory chain. The immediate electron acceptor for the enzyme in this species is believed to be ubiquinone. Couples the redox reaction to proton translocation (for every two electrons transferred, four hydrogen ions are translocated across the cytoplasmic membrane), and thus conserves the redox energy in a proton gradient. This Rickettsia conorii (strain ATCC VR-613 / Malish 7) protein is NADH-quinone oxidoreductase subunit C.